The primary structure comprises 248 residues: MIKTETSKIKLINEDNLRLDGRSFNELRPIKIEAGVLNRADGSAYIEWGGNKIIVGVYGPKEAYPKHSQDIDHAVVKARYNMAAFSVDERKRPGPDRRTMEISKVISEALSSSIMIEQFPRAEIDVYIEVLQADAGTRIAGLTAATVALADAGIPMRDMVVGCTAGKVDGHIVLDLSKEEDNFGEADIPMAIMPKTGEIVLLQMDGDVTEDEFYEATSMIIEATKKISQIQRNALLNKYKIEGIEGGE.

It belongs to the RNase PH family. Rrp41 subfamily. Component of the archaeal exosome complex. Forms a hexameric ring-like arrangement composed of 3 Rrp41-Rrp42 heterodimers. The hexameric ring associates with a trimer of Rrp4 and/or Csl4 subunits.

It localises to the cytoplasm. Its function is as follows. Catalytic component of the exosome, which is a complex involved in RNA degradation. Has 3'-&gt;5' exoribonuclease activity. Can also synthesize heteromeric RNA-tails. In Thermoplasma volcanium (strain ATCC 51530 / DSM 4299 / JCM 9571 / NBRC 15438 / GSS1), this protein is Exosome complex component Rrp41.